The primary structure comprises 66 residues: Phylloseptin-S3 (66 aa).

The first 22 residues, 1 to 22 (MAFLKKSLFLVLFLGLVSLSIC), serve as a signal peptide directing secretion. Positions 23–46 (EEEKRETEEEEHDQEEDDKSEEKR) are excised as a propeptide. Residues 25-44 (EKRETEEEEHDQEEDDKSEE) are disordered. The span at 30-41 (EEEEHDQEEDDK) shows a compositional bias: acidic residues. A Phenylalanine amide modification is found at F65.

The protein belongs to the frog skin active peptide (FSAP) family. Phylloseptin subfamily. As to expression, expressed by the skin glands.

The protein localises to the secreted. It localises to the target cell membrane. Its function is as follows. Antimicrobial peptide with activity against the Gram-positive S.pyogenes (MIC=12.5 uM), but not against all other bacteria tested (both Gram-positive and Gram-negative). Does not show activity against fungi, and against Leishmania species. This is Phylloseptin-S3 from Phyllomedusa sauvagei (Sauvage's leaf frog).